The primary structure comprises 506 residues: Histidine ammonia-lyase (506 aa).

The segment at residues 143–145 is a cross-link (5-imidazolinone (Ala-Gly)); that stretch reads ASG. Serine 144 carries the post-translational modification 2,3-didehydroalanine (Ser).

It belongs to the PAL/histidase family. In terms of processing, contains an active site 4-methylidene-imidazol-5-one (MIO), which is formed autocatalytically by cyclization and dehydration of residues Ala-Ser-Gly.

It localises to the cytoplasm. The catalysed reaction is L-histidine = trans-urocanate + NH4(+). It participates in amino-acid degradation; L-histidine degradation into L-glutamate; N-formimidoyl-L-glutamate from L-histidine: step 1/3. The protein is Histidine ammonia-lyase of Salmonella arizonae (strain ATCC BAA-731 / CDC346-86 / RSK2980).